The primary structure comprises 125 residues: Large ribosomal subunit protein bL12 (125 aa).

It belongs to the bacterial ribosomal protein bL12 family. As to quaternary structure, homodimer. Part of the ribosomal stalk of the 50S ribosomal subunit. Forms a multimeric L10(L12)X complex, where L10 forms an elongated spine to which 2 to 4 L12 dimers bind in a sequential fashion. Binds GTP-bound translation factors.

Functionally, forms part of the ribosomal stalk which helps the ribosome interact with GTP-bound translation factors. Is thus essential for accurate translation. In Paraburkholderia phymatum (strain DSM 17167 / CIP 108236 / LMG 21445 / STM815) (Burkholderia phymatum), this protein is Large ribosomal subunit protein bL12.